The primary structure comprises 838 residues: Envelope glycoprotein H (838 aa).

An N-terminal signal peptide occupies residues 1–18 (MGPGLWVVMGVLVGVAGG). Over 21 to 803 (TYWTEQIDPW…DTLPIATIAP (783 aa)) the chain is Virion surface. N-linked (GlcNAc...) asparagine; by host glycans are attached at residues asparagine 73 and asparagine 120. Positions 171–190 (GLTFPRGDDGATERHPDGRR) are enriched in basic and acidic residues. Residues 171–207 (GLTFPRGDDGATERHPDGRRNAPPPGPPAGTPRHPTT) are disordered. 2 N-linked (GlcNAc...) asparagine; by host glycosylation sites follow: asparagine 208 and asparagine 216. A disulfide bridge links cysteine 258 with cysteine 429. An interaction with gL region spans residues 259–323 (DAALVRARYG…PAGPRYRVFV (65 aa)). Asparagine 332, asparagine 437, asparagine 670, and asparagine 784 each carry an N-linked (GlcNAc...) asparagine; by host glycan. Residues 804–824 (GFLAASALGVVMITAALAGIL) traverse the membrane as a helical segment. Residues 825–838 (RVVRTCVPFLWRRE) are Intravirion-facing.

It belongs to the herpesviridae glycoprotein H family. As to quaternary structure, interacts with glycoprotein L (gL); this interaction is necessary for the correct processing and cell surface expression of gH. The heterodimer gH/gL seems to interact with gB trimers during fusion. Interacts with host integrins ITGAV/ITGB3 to mediate viral entry into epithelial cells. Post-translationally, N-glycosylated, O-glycosylated, and sialylated.

It localises to the virion membrane. Its subcellular location is the host cell membrane. The protein resides in the host endosome membrane. The heterodimer glycoprotein H-glycoprotein L is required for the fusion of viral and plasma membranes leading to virus entry into the host cell. Following initial binding to host receptor, membrane fusion is mediated by the fusion machinery composed of gB and the heterodimer gH/gL. May also be involved in the fusion between the virion envelope and the outer nuclear membrane during virion morphogenesis. Interaction with host integrins ITGAV/ITGB3 triggers release of cytosolic Ca(2+) and FAK phosphorylation leading to efficient viral entry into host genital tract epithelial cells. This is Envelope glycoprotein H from Human herpesvirus 2 (strain HG52) (HHV-2).